Consider the following 302-residue polypeptide: Bifunctional protein FolD (302 aa).

Residues 165-167, Ser190, and Ile231 each bind NADP(+); that span reads GRS.

It belongs to the tetrahydrofolate dehydrogenase/cyclohydrolase family. As to quaternary structure, homodimer.

It carries out the reaction (6R)-5,10-methylene-5,6,7,8-tetrahydrofolate + NADP(+) = (6R)-5,10-methenyltetrahydrofolate + NADPH. The catalysed reaction is (6R)-5,10-methenyltetrahydrofolate + H2O = (6R)-10-formyltetrahydrofolate + H(+). Its pathway is one-carbon metabolism; tetrahydrofolate interconversion. Catalyzes the oxidation of 5,10-methylenetetrahydrofolate to 5,10-methenyltetrahydrofolate and then the hydrolysis of 5,10-methenyltetrahydrofolate to 10-formyltetrahydrofolate. The polypeptide is Bifunctional protein FolD (Prochlorococcus marinus (strain SARG / CCMP1375 / SS120)).